Here is a 221-residue protein sequence, read N- to C-terminus: Ribonuclease T (221 aa).

Residues 20 to 194 (VVIDVETAGF…YDTERTAELF (175 aa)) form the Exonuclease domain. Residues Asp-23, Glu-25, His-181, and Asp-186 each contribute to the Mg(2+) site. The active-site Proton donor/acceptor is His-181.

It belongs to the RNase T family. As to quaternary structure, homodimer. Mg(2+) serves as cofactor.

Functionally, trims short 3' overhangs of a variety of RNA species, leaving a one or two nucleotide 3' overhang. Responsible for the end-turnover of tRNA: specifically removes the terminal AMP residue from uncharged tRNA (tRNA-C-C-A). Also appears to be involved in tRNA biosynthesis. This is Ribonuclease T from Shewanella frigidimarina (strain NCIMB 400).